A 494-amino-acid polypeptide reads, in one-letter code: Ceramide glucosyltransferase (494 aa).

At 1–6 (MPLLMD) the chain is on the lumenal side. The helical transmembrane segment at 7-27 (GLAYAGAIWSLIVFCVQAIGL) threads the bilayer. Topologically, residues 28–337 (YQLFRSYSRP…VRWLRVRKWT (310 aa)) are cytoplasmic. Asp-95 is a short sequence motif (D1). Asp-160 is a short sequence motif (D2). A short sequence motif (D3) is located at residue Asp-285. The active-site Proton acceptor is Asp-285. The (Q/R)XXRW signature appears at 326-330 (RRVRW). The chain crosses the membrane as a helical span at residues 338–358 (VLLATLVEPGVESMVCCMAFA). The Lumenal segment spans residues 359 to 380 (HALTTTPWCPNPADWPIPHTWT). The chain crosses the membrane as a helical span at residues 381 to 401 (ALWSIWLAAIAVWATLDYVVY). The Cytoplasmic portion of the chain corresponds to 402-428 (HFLHSCRSIEKDADSPDFAQGNELMKR). Residues 429 to 449 (PFGAWILAWIGREILALPIWT) form a helical membrane-spanning segment. The Lumenal portion of the chain corresponds to 450–494 (RAVLLGTTVTWRGTKFKVRPDQSVVDIPNAGAKSNGIGSTNRKVR).

This sequence belongs to the glycosyltransferase 2 family.

It is found in the golgi apparatus membrane. It catalyses the reaction an N-acylsphing-4-enine + UDP-alpha-D-glucose = a beta-D-glucosyl-(1&lt;-&gt;1')-N-acylsphing-4-enine + UDP + H(+). It functions in the pathway lipid metabolism; sphingolipid metabolism. Functionally, catalyzes the final step in the biosynthesis of the membrane lipid glucosylceramide (GluCer), the transfer of glucose to ceramide. Glucosylceramides play important roles in growth, differentiation and pathogenicity. The chain is Ceramide glucosyltransferase from Pyricularia oryzae (strain 70-15 / ATCC MYA-4617 / FGSC 8958) (Rice blast fungus).